A 200-amino-acid polypeptide reads, in one-letter code: Probable gluconokinase (200 aa).

34-41 (GVSGSGKT) contributes to the ATP binding site.

The protein belongs to the gluconokinase GntK/GntV family.

It carries out the reaction D-gluconate + ATP = 6-phospho-D-gluconate + ADP + H(+). It functions in the pathway carbohydrate acid metabolism; D-gluconate degradation. This Dictyostelium discoideum (Social amoeba) protein is Probable gluconokinase.